Here is a 398-residue protein sequence, read N- to C-terminus: Probable purine permease 17 (398 aa).

The interval 1-26 (MEMSKASKQTTRHEESEHVQNPEPDQ) is disordered. Basic and acidic residues predominate over residues 11–20 (TRHEESEHVQ). Ser29 bears the Phosphoserine mark. 10 consecutive transmembrane segments (helical) span residues 43 to 63 (ISVS…MLLL), 88 to 108 (WTQA…FFIF), 127 to 147 (LFFL…LFAL), 155 to 175 (GIFS…TAII), 183 to 203 (WIII…PDFG), 219 to 239 (WLAF…QLGF), 258 to 278 (VLEM…VGLF), 301 to 321 (VLSL…MIGL), 332 to 352 (VVHM…FDFM), and 355 to 375 (VFSW…GSYF).

The protein belongs to the purine permeases (TC 2.A.7.14) family.

The protein resides in the membrane. The sequence is that of Probable purine permease 17 (PUP17) from Arabidopsis thaliana (Mouse-ear cress).